The sequence spans 461 residues: GTPase Der (461 aa).

EngA-type G domains follow at residues 2-164 and 197-369; these read QSII…NENF and IKVG…ANFT. GTP contacts are provided by residues 8–15, 55–59, 116–119, 203–210, 250–254, and 314–317; these read GKPNVGKS, DSGGL, NKID, GRVNVGKS, DTAGI, and NKWD. The region spanning 370–454 is the KH-like domain; it reads QKIPTAKLNA…PLIIVSRKKG (85 aa).

This sequence belongs to the TRAFAC class TrmE-Era-EngA-EngB-Septin-like GTPase superfamily. EngA (Der) GTPase family. As to quaternary structure, associates with the 50S ribosomal subunit.

Functionally, GTPase that plays an essential role in the late steps of ribosome biogenesis. The polypeptide is GTPase Der (Campylobacter lari (strain RM2100 / D67 / ATCC BAA-1060)).